The sequence spans 432 residues: GTPase Obg (432 aa).

The region spanning 1-159 (MKFIDTAKFT…YEVKAELKVL (159 aa)) is the Obg domain. Residues 160-332 (ADVGFVGLPN…LLLKIAKELE (173 aa)) form the OBG-type G domain. GTP is bound by residues 166–173 (GLPNAGKS), 191–195 (FTTLN), 213–216 (DLPG), 284–287 (NKMD), and 313–315 (SGL). 2 residues coordinate Mg(2+): S173 and T193. Residues 354–432 (RLEEDEEDIQ…VFEYELEWMD (79 aa)) enclose the OCT domain.

The protein belongs to the TRAFAC class OBG-HflX-like GTPase superfamily. OBG GTPase family. In terms of assembly, monomer. Requires Mg(2+) as cofactor.

It localises to the cytoplasm. Functionally, an essential GTPase which binds GTP, GDP and possibly (p)ppGpp with moderate affinity, with high nucleotide exchange rates and a fairly low GTP hydrolysis rate. Plays a role in control of the cell cycle, stress response, ribosome biogenesis and in those bacteria that undergo differentiation, in morphogenesis control. In Mesoplasma florum (strain ATCC 33453 / NBRC 100688 / NCTC 11704 / L1) (Acholeplasma florum), this protein is GTPase Obg.